We begin with the raw amino-acid sequence, 233 residues long: Putative T-box protein 41 (233 aa).

Positions 1–146 form a DNA-binding region, T-box; it reads MTVTRNGCRI…MNPHARHFLK (146 aa).

It localises to the nucleus. The polypeptide is Putative T-box protein 41 (tbx-41) (Caenorhabditis elegans).